A 435-amino-acid polypeptide reads, in one-letter code: MAHNEPITIDDAGDDFDAVEDNQAINEQYKVWKKNTPFLYDTVITHALTWPSLTCQWLPDITDVPDTDYTSQRLIIGTHTSGQANDHLIIAEVLLPKKGAGISDKALADLYDEEKQEIGSYTASPARIRAIQTINHAGEVNRARYMPQNPELIATKTVTGEVYVFDRTKHESKAPANGECKPDIRLKGQTKEGYGLSWNALKEGHILSASEDTTIGHWDIQGYSKQDPSLQPLRLYTGHSAYVADVEWHPKNENMFGSVSDDGQIMIWDTRSDNTAKASSQVQGHNAEINCISFAPSSEYLFLTGSSDNTIALWDLRKLSTKHHSFEAHTNDVLQLSWSPTSPVHFASASADRRVHIWDLDAIGAEQTPDDAEDGPPELLFVHGGHTSKVCDISWSPSSPWTIASASEDNILQVWEPSRHLRTPYEAEFDEKDLE.

WD repeat units lie at residues 135-175, 188-228, 238-278, 284-324, and 328-368; these read NHAG…SKAP, GQTK…KQDP, GHSA…TAKA, GHNA…TKHH, and AHTN…AEQT. Positions 370–374 are interaction with the histone H4 N-terminus; sequence DDAED. A WD 6 repeat occupies 385-425; the sequence is GHTSKVCDISWSPSSPWTIASASEDNILQVWEPSRHLRTPY.

Belongs to the WD repeat RBAP46/RBAP48/MSI1 family. As to quaternary structure, component of the HAT-B complex composed of at least HAT1 and HAT2. The HAT-B complex binds to histone H4 tail.

The protein localises to the cytoplasm. It localises to the nucleus. In terms of biological role, regulatory subunit of the histone acetylase B (HAT-B) complex. The complex acetylates 'Lys-12' of histone H4 which is required for telomeric silencing. The sequence is that of Histone acetyltransferase type B subunit 2 (HAT2) from Cryptococcus neoformans var. neoformans serotype D (strain B-3501A) (Filobasidiella neoformans).